The chain runs to 511 residues: Glucose-1-phosphate adenylyltransferase large subunit 1, chloroplastic/amyloplastic (511 aa).

The transit peptide at 1–58 (MAAMDLRVAAPASVAAAARCGTSLARPWPARAVGGGGGGGGRGRRLSVRTSVATTEAA) directs the protein to the chloroplast.

It belongs to the bacterial/plant glucose-1-phosphate adenylyltransferase family. As to quaternary structure, heterotetramer composed of two small and two large subunits. Expressed in leaves and stems.

It is found in the plastid. Its subcellular location is the chloroplast. It localises to the amyloplast. The catalysed reaction is alpha-D-glucose 1-phosphate + ATP + H(+) = ADP-alpha-D-glucose + diphosphate. It functions in the pathway glycan biosynthesis; starch biosynthesis. With respect to regulation, activated by 3'phosphoglycerate, inhibited by orthophosphate. Allosteric regulation. Its function is as follows. Involved in synthesis of starch. Catalyzes the synthesis of ADP-glucose, a molecule that serves as an activated glycosyl donor for alpha-1,4-glucan synthesis. Essential for starch synthesis in leaf chloroplasts and endosperm amyloplasts. In Oryza sativa subsp. japonica (Rice), this protein is Glucose-1-phosphate adenylyltransferase large subunit 1, chloroplastic/amyloplastic.